Reading from the N-terminus, the 329-residue chain is uncharacterized protein (329 aa).

Coiled-coil stretches lie at residues lysine 57–threonine 120 and glutamine 225–methionine 251.

This is an uncharacterized protein from Homo sapiens (Human).